A 131-amino-acid polypeptide reads, in one-letter code: Small ribosomal subunit protein uS11 (131 aa).

It belongs to the universal ribosomal protein uS11 family. In terms of assembly, part of the 30S ribosomal subunit. Interacts with proteins S7 and S18. Binds to IF-3.

In terms of biological role, located on the platform of the 30S subunit, it bridges several disparate RNA helices of the 16S rRNA. Forms part of the Shine-Dalgarno cleft in the 70S ribosome. The chain is Small ribosomal subunit protein uS11 from Trichormus variabilis (strain ATCC 29413 / PCC 7937) (Anabaena variabilis).